A 328-amino-acid polypeptide reads, in one-letter code: MTSISSIAVLGGGAWGTALAQTAARAGRAVTLWEHDATNAQQLQSARESLYLPGVTLEPAIKVTRDLAEAARADAILLVVPAQVLRQVVTSLAPLIGAQTPLIACAKGIEHGTHKFMTEIIAEAAPNALPAILSGPSFAADVARGLPTAVTIAAADAAVAQALAQAMNCGSFRPYHSTDVRGVELGGATKNVMAIAAGIVEGRKLGASALAAMTTRGFVELVRFGTAYGARIETMHGLSGLGDLTMCCSTPQSRNFSFGMALGRGESVATAAHGKLAEGAFTAPVLLEMARAKHVEMPISEAVAAILEGQTTVDAAIGALLTRPLKAE.

Positions 15, 35, 51, and 107 each coordinate NADPH. Sn-glycerol 3-phosphate-binding residues include Lys-107, Gly-135, and Ser-137. Ala-139 is a binding site for NADPH. Positions 190, 243, 253, 254, and 255 each coordinate sn-glycerol 3-phosphate. Catalysis depends on Lys-190, which acts as the Proton acceptor. Arg-254 provides a ligand contact to NADPH. Leu-276 and Glu-278 together coordinate NADPH.

Belongs to the NAD-dependent glycerol-3-phosphate dehydrogenase family.

The protein localises to the cytoplasm. It catalyses the reaction sn-glycerol 3-phosphate + NAD(+) = dihydroxyacetone phosphate + NADH + H(+). The catalysed reaction is sn-glycerol 3-phosphate + NADP(+) = dihydroxyacetone phosphate + NADPH + H(+). It participates in membrane lipid metabolism; glycerophospholipid metabolism. Its function is as follows. Catalyzes the reduction of the glycolytic intermediate dihydroxyacetone phosphate (DHAP) to sn-glycerol 3-phosphate (G3P), the key precursor for phospholipid synthesis. The protein is Glycerol-3-phosphate dehydrogenase [NAD(P)+] of Rhodopseudomonas palustris (strain BisA53).